Reading from the N-terminus, the 262-residue chain is tRNA pseudouridine synthase A (262 aa).

Asp-51 (nucleophile) is an active-site residue. Tyr-109 lines the substrate pocket.

It belongs to the tRNA pseudouridine synthase TruA family. As to quaternary structure, homodimer.

It carries out the reaction uridine(38/39/40) in tRNA = pseudouridine(38/39/40) in tRNA. Functionally, formation of pseudouridine at positions 38, 39 and 40 in the anticodon stem and loop of transfer RNAs. The chain is tRNA pseudouridine synthase A from Aliivibrio fischeri (strain ATCC 700601 / ES114) (Vibrio fischeri).